Reading from the N-terminus, the 359-residue chain is GalNAc-alpha-(1-&gt;4)-GalNAc-alpha-(1-&gt;3)-diNAcBac-PP-undecaprenol alpha-1,4-N-acetyl-D-galactosaminyltransferase (359 aa).

Glu17 contacts substrate. UDP-N-acetyl-alpha-D-galactosamine is bound at residue Tyr45. 71-74 (RFKK) contacts substrate. UDP-N-acetyl-alpha-D-galactosamine-binding positions include His117, Arg190, Lys195, Val246, and 266 to 274 (EGLPTVLIE). Arg190 is a substrate binding site.

This sequence belongs to the glycosyltransferase group 1 family.

It is found in the cell inner membrane. It catalyses the reaction N-acetyl-alpha-D-galactosaminyl-(1-&gt;4)-N-acetyl-alpha-D-galactosaminyl-(1-&gt;3)-N,N'-diacetyl-alpha-D-bacillosaminyl-tri-trans,heptacis-undecaprenyl diphosphate + 3 UDP-N-acetyl-alpha-D-galactosamine = [alpha-D-GalNAc-(1-&gt;4)]4-alpha-D-GalNAc-(1-&gt;3)-alpha-D-diNAcBac-tri-trans,hepta-cis-undecaprenyl diphosphate + 3 UDP + 3 H(+). The protein operates within protein modification; protein glycosylation. Processive glycosyltransferase that is part of the biosynthetic pathway of the lipid-linked oligosaccharide (LLO) that serves as the glycan donor in bacterial protein N-glycosylation. Catalyzes the transfer of exactly three alpha-(1-&gt;4)-N-acetylgalactosamine (GalNAc) units to the growing LLO precursor, GalNAc-alpha-(1-&gt;4)-GalNAc-alpha-(1-&gt;3)-diNAcBac-PP-undecaprenyl. Cannot accept UDP-GlcNAc as substrate. This Campylobacter jejuni subsp. jejuni serotype O:2 (strain ATCC 700819 / NCTC 11168) protein is GalNAc-alpha-(1-&gt;4)-GalNAc-alpha-(1-&gt;3)-diNAcBac-PP-undecaprenol alpha-1,4-N-acetyl-D-galactosaminyltransferase.